Reading from the N-terminus, the 168-residue chain is ATP synthase subunit b (168 aa).

A helical membrane pass occupies residues 7 to 26 (FVLSNFIFTLINLWIMYWVL).

The protein belongs to the ATPase B chain family. F-type ATPases have 2 components, F(1) - the catalytic core - and F(0) - the membrane proton channel. F(1) has five subunits: alpha(3), beta(3), gamma(1), delta(1), epsilon(1). F(0) has three main subunits: a(1), b(2) and c(10-14). The alpha and beta chains form an alternating ring which encloses part of the gamma chain. F(1) is attached to F(0) by a central stalk formed by the gamma and epsilon chains, while a peripheral stalk is formed by the delta and b chains.

The protein localises to the cell membrane. Its function is as follows. F(1)F(0) ATP synthase produces ATP from ADP in the presence of a proton or sodium gradient. F-type ATPases consist of two structural domains, F(1) containing the extramembraneous catalytic core and F(0) containing the membrane proton channel, linked together by a central stalk and a peripheral stalk. During catalysis, ATP synthesis in the catalytic domain of F(1) is coupled via a rotary mechanism of the central stalk subunits to proton translocation. In terms of biological role, component of the F(0) channel, it forms part of the peripheral stalk, linking F(1) to F(0). In Alkaliphilus metalliredigens (strain QYMF), this protein is ATP synthase subunit b.